Reading from the N-terminus, the 443-residue chain is Ribosomal protein uS12 methylthiotransferase RimO (443 aa).

Residues 10–120 form the MTTase N-terminal domain; the sequence is PRVGFVSLGC…VVKAVHQHLP (111 aa). Residues Cys19, Cys55, Cys84, Cys151, Cys155, and Cys158 each contribute to the [4Fe-4S] cluster site. A Radical SAM core domain is found at 137–375; sequence LTPAHYAYLK…DFQEDISTQR (239 aa). Residues 377–443 form the TRAM domain; the sequence is ERWIGRDITV…VHDLYARPLP (67 aa).

This sequence belongs to the methylthiotransferase family. RimO subfamily. Requires [4Fe-4S] cluster as cofactor.

Its subcellular location is the cytoplasm. It carries out the reaction L-aspartate(89)-[ribosomal protein uS12]-hydrogen + (sulfur carrier)-SH + AH2 + 2 S-adenosyl-L-methionine = 3-methylsulfanyl-L-aspartate(89)-[ribosomal protein uS12]-hydrogen + (sulfur carrier)-H + 5'-deoxyadenosine + L-methionine + A + S-adenosyl-L-homocysteine + 2 H(+). Catalyzes the methylthiolation of an aspartic acid residue of ribosomal protein uS12. This chain is Ribosomal protein uS12 methylthiotransferase RimO, found in Aromatoleum aromaticum (strain DSM 19018 / LMG 30748 / EbN1) (Azoarcus sp. (strain EbN1)).